The chain runs to 590 residues: CTP synthase (590 aa).

Residues 1–281 (MPALRKHPQT…DAYVVRRLNL (281 aa)) are amidoligase domain. A CTP-binding site is contributed by S23. Residue S23 coordinates UTP. Residues 24 to 29 (SLGKGL) and D81 each bind ATP. The Mg(2+) site is built by D81 and E155. CTP contacts are provided by residues 162-164 (DIE), 202-207 (KTKPTQ), and K238. UTP is bound by residues 202–207 (KTKPTQ) and K238. One can recognise a Glutamine amidotransferase type-1 domain in the interval 306 to 554 (RIALVGKYID…IGAAIDYKAA (249 aa)). L-glutamine is bound at residue G369. C396 acts as the Nucleophile; for glutamine hydrolysis in catalysis. L-glutamine-binding positions include 397 to 400 (LGLQ), E419, and R480. Active-site residues include H527 and E529.

It belongs to the CTP synthase family. Homotetramer.

It carries out the reaction UTP + L-glutamine + ATP + H2O = CTP + L-glutamate + ADP + phosphate + 2 H(+). The enzyme catalyses L-glutamine + H2O = L-glutamate + NH4(+). It catalyses the reaction UTP + NH4(+) + ATP = CTP + ADP + phosphate + 2 H(+). It functions in the pathway pyrimidine metabolism; CTP biosynthesis via de novo pathway; CTP from UDP: step 2/2. With respect to regulation, allosterically activated by GTP, when glutamine is the substrate; GTP has no effect on the reaction when ammonia is the substrate. The allosteric effector GTP functions by stabilizing the protein conformation that binds the tetrahedral intermediate(s) formed during glutamine hydrolysis. Inhibited by the product CTP, via allosteric rather than competitive inhibition. Catalyzes the ATP-dependent amination of UTP to CTP with either L-glutamine or ammonia as the source of nitrogen. Regulates intracellular CTP levels through interactions with the four ribonucleotide triphosphates. This is CTP synthase from Mycolicibacterium smegmatis (strain ATCC 700084 / mc(2)155) (Mycobacterium smegmatis).